Consider the following 233-residue polypeptide: Cysteine-rich venom protein (233 aa).

Residues 1-12 (PILAAVLQQSSG) form the signal peptide. The 129-residue stretch at 31 to 159 (VDLHNSLRRS…PYSYFFVCQY (129 aa)) folds into the SCP domain. Intrachain disulfides connect Cys-68–Cys-146, Cys-85–Cys-160, Cys-141–Cys-157, Cys-179–Cys-186, Cys-182–Cys-191, Cys-195–Cys-228, Cys-204–Cys-222, and Cys-213–Cys-226. The ShKT domain occupies 195–228 (CTRENKFTNCNTMVQQSSCQDNYMKTNCPASCFC).

This sequence belongs to the CRISP family. As to expression, expressed by the venom gland.

The protein localises to the secreted. In terms of biological role, blocks contraction of smooth muscle elicited by high potassium-induced depolarization, but does not block caffeine-stimulated contraction. May target voltage-gated calcium channels on smooth muscle. The chain is Cysteine-rich venom protein from Trimeresurus stejnegeri (Chinese green tree viper).